The primary structure comprises 126 residues: uncharacterized protein (126 aa).

A disordered region spans residues 13-45; sequence VAPKAGREEEQPPPPAGLGCGARGEPGRGPLEH.

The protein localises to the cytoplasm. The protein resides in the cytoskeleton. It localises to the cilium basal body. This is an uncharacterized protein from Homo sapiens (Human).